The following is a 514-amino-acid chain: MGALLRALLLLVLAQWLLSAVPALAPAPFTLPLQVAGATNHRASAVPGLGTPELPRADGLALALEPVRATANFLAMVDNLQGDSGRGYYLEMLIGTPPQKVQILVDTGSSNFAVAGAPHSYIDTYFDSESSSTYHSKGFDVTVKYTQGSWTGFVGEDLVTIPKGFNSSFLVNIATIFESENFFLPGIKWNGILGLAYAALAKPSSSLETFFDSLVAQAKIPDIFSMQMCGAGLPVAGSGTNGGSLVLGGIEPSLYKGDIWYTPIKEEWYYQIEILKLEIGGQNLNLDCREYNADKAIVDSGTTLLRLPQKVFDAVVEAVARTSLIPEFSDGFWTGAQLACWTNSETPWAYFPKISIYLRDENASRSFRITILPQLYIQPMMGAGFNYECYRFGISSSTNALVIGATVMEGFYVVFDRAQRRVGFAVSPCAEIEGTTVSEISGPFSTEDIASNCVPAQALNEPILWIVSYALMSVCGAILLVLILLLLLPLHCRHAPRDPEVVNDESSLVRHRWK.

Positions 1–19 (MGALLRALLLLVLAQWLLS) are cleaved as a signal peptide. The propeptide occupies 20-62 (AVPALAPAPFTLPLQVAGATNHRASAVPGLGTPELPRADGLAL). The Extracellular portion of the chain corresponds to 20 to 469 (AVPALAPAPF…NEPILWIVSY (450 aa)). In terms of domain architecture, Peptidase A1 spans 88 to 425 (YYLEMLIGTP…DRAQRRVGFA (338 aa)). Asp-106 is a catalytic residue. A glycan (N-linked (GlcNAc...) asparagine) is linked at Asn-166. 3 disulfides stabilise this stretch: Cys-229–Cys-429, Cys-288–Cys-453, and Cys-340–Cys-389. Asp-299 is a catalytic residue. Asn-362 carries an N-linked (GlcNAc...) asparagine glycan. Residues 470–490 (ALMSVCGAILLVLILLLLLPL) traverse the membrane as a helical segment. Topologically, residues 491-514 (HCRHAPRDPEVVNDESSLVRHRWK) are cytoplasmic.

It belongs to the peptidase A1 family. Monomer. Interacts with RTN3 and RTN4. Post-translationally, undergoes autoproteolytic cleavage. In terms of processing, glycosylated. High expression in pancreatic islets. Expressed at much lower levels in the pituitary, colon, and ovaries and is nearly absent from all the other tissues.

It is found in the cell membrane. The protein resides in the golgi apparatus. The protein localises to the endoplasmic reticulum. It localises to the endosome. Its subcellular location is the melanosome. It carries out the reaction Broad endopeptidase specificity. Cleaves Glu-Val-Asn-Leu-|-Asp-Ala-Glu-Phe in the Swedish variant of Alzheimer's amyloid precursor protein.. Responsible for the proteolytic processing of the amyloid precursor protein (APP). Cleaves APP, between residues 690 and 691, leading to the generation and extracellular release of beta-cleaved soluble APP, and a corresponding cell-associated C-terminal fragment which is later released by gamma-secretase. It has also been shown that it can cleave APP between residues 671 and 672. Involved in the proteolytic shedding of PMEL at early stages of melanosome biogenesis. Cleaves PMEL within the M-beta fragment to release the amyloidogenic PMEL luminal fragment containing M-alpha and a small portion of M-beta N-terminus. This is a prerequisite step for subsequent processing and assembly of PMEL fibrils into amyloid sheets. Responsible also for the proteolytic processing of CLTRN in pancreatic beta cells. This is Beta-secretase 2 (Bace2) from Mus musculus (Mouse).